Here is a 397-residue protein sequence, read N- to C-terminus: Ornithine aminotransferase (397 aa).

Lys255 carries the N6-(pyridoxal phosphate)lysine modification.

It belongs to the class-III pyridoxal-phosphate-dependent aminotransferase family. OAT subfamily. Pyridoxal 5'-phosphate serves as cofactor.

The protein resides in the cytoplasm. The enzyme catalyses a 2-oxocarboxylate + L-ornithine = L-glutamate 5-semialdehyde + an L-alpha-amino acid. It participates in amino-acid biosynthesis; L-proline biosynthesis; L-glutamate 5-semialdehyde from L-ornithine: step 1/1. Its function is as follows. Catalyzes the interconversion of ornithine to glutamate semialdehyde. The sequence is that of Ornithine aminotransferase from Macrococcus caseolyticus (strain JCSC5402) (Macrococcoides caseolyticum).